We begin with the raw amino-acid sequence, 304 residues long: Probable phytol kinase 2, chloroplastic (304 aa).

Residues 1-59 constitute a chloroplast transit peptide; sequence MVSLISAHLLSLPSSAPRSRPQSRPPLSPPAAAAAASCSFDLPRPRRLVADGSRRKGTM. Helical transmembrane passes span 68 to 88, 113 to 133, 134 to 154, 170 to 190, 194 to 214, 231 to 251, and 256 to 276; these read SGLA…LALL, IGMV…APFL, AAVA…GVMK, ELLK…SIFW, PIAI…DIVG, AGSI…MHYF, and FIEE…TAAL.

This sequence belongs to the polyprenol kinase family.

It is found in the plastid. It localises to the chloroplast membrane. It carries out the reaction phytol + CTP = phytyl phosphate + CDP + H(+). The protein operates within cofactor biosynthesis; tocopherol biosynthesis. Involved in the activation and reutilization of phytol from chlorophyll degradation in plant metabolism, including tocopherol biosynthesis. Catalyzes the conversion of phytol to phytol monophosphate (PMP). This chain is Probable phytol kinase 2, chloroplastic, found in Oryza sativa subsp. japonica (Rice).